A 271-amino-acid polypeptide reads, in one-letter code: 5'-nucleotidase SurE (271 aa).

A divalent metal cation contacts are provided by aspartate 14, aspartate 15, serine 46, and asparagine 104.

Belongs to the SurE nucleotidase family. It depends on a divalent metal cation as a cofactor.

It is found in the cytoplasm. The catalysed reaction is a ribonucleoside 5'-phosphate + H2O = a ribonucleoside + phosphate. In terms of biological role, nucleotidase that shows phosphatase activity on nucleoside 5'-monophosphates. This Gloeothece citriformis (strain PCC 7424) (Cyanothece sp. (strain PCC 7424)) protein is 5'-nucleotidase SurE.